The following is a 2008-amino-acid chain: MSFREIKAGEKAKHPEDHGKKQSSSWINGMENSTQASTSVEKRNHHWRSYKLIIDPALKKGQHKLYRYDGQHFSMPNSGIAPVDCVRDPRIGRIWTKTKELELSVPKFKIDEFYVGPVPPKQVTFAKLNDNIRENFLTDMCKKYGEVEEVEILYNPKNKKHLGIAKVIFATVKGAREAVQHLHNTSVMGNIIHVELDTKGETRMRFYELLVNGLYTPQTLPVGTEQDASPTVNETLQLTDSLKRLKDSNLSSVGSSVTPNSSTPFSHDTAYSSCRQDTPNSFSQFTPQSQGTPHTPRLGTPFSQDSTYSSRQTTPVYHFGQDSGYKHRRHETKFTDAYNRRPGGHHYVHNSPGVFRGTEHQFSTFKSHQQEPVQFSHTPPLSHSSSSSYKSAFSPYQAPAVFPQSEEQPFAQTSREAEYRRPAPPPAEMVVESSAATSADFAPVKEKPEEPPPLPDSNSAPEPSAPSFSQTPERSETPGTPTMESEMQHNSLDSRIEMLLKEQRTKLPFLNEHDSDNEVRMEGSPISSSSSQLSPIPMYGSNSQPGYRAQTPSSRPSSTGLEDISPTPLPDSDDDEPIPGTASLNQNSRGTSEASMTPIDQLNRASKVETLEVKEMVPGDQTPTSEKMDESQHSSGEDMEISDDEMNSAPITSAECAKTIVVNSSVSNAAVMAPSIPPLPPPPGFPPLPPPPPPPPQPAFPMPPPLPPPPPPTHPAVTVPPPPLPAPPGVPPPHILPPLPPFHPGMFPVMQVDMISVLGNHWGGMPMSFQMQTQMLSRMMQAQNTYQYPPFMGGRMQFVNLPPYRPFSMGAARGRGQQWPPLPKFDPSVPPPGYEPKKEDPHKATVDGVLLVIVKELKAIMKRDLNRKMVEVVAFRAFDDWWDKKERLAKASLTPVKSGGELEEKPKPKDRITSCLLENWNKGEGLGYEGIGLGIGLRGAIRLPSFKVKRKEPPEAASAGDQKRIRPSTSVDDEDEESERDRDASDTTSDLSKKDAEAVGLRRRPARPLELDSEGEEGDETSGKEEESSSEKEEEQEEEGGLVKAAPGKEEEEDEDDEEDEDDDEDEEDEEDYEETGVETSDKEEEQDSEEEDAASPSSSKAEVESSDESEDSSEFESSSDSDEDDDEEEEEEEDEEEEEEEEVAEDQDREAMVAETEHEPASHELPDDKRETILELYPVDYMDATGLGLSEPALVEKDEGMEEVKAEESECDQVPEESIAAETLKQLVMERDQETKLALSPICRPVEEPEPIVMLEPEVQECPKPESQDEAGTVCLSTPVAVFGEARPSKSSFFSKSDDSCLETHVKTKLPSAVEEEDRLPRTPGREVVVHSETDILLLPAHKVPSSTVPLPSTPGKEESVVPPEKFPEQLMVTKTSIEEEIPRTPGRDILAKSSHPLGKSQSTDTVPATPGSDAPLTGSSLTLSSPQVPGSPFSYPSQSPGINSGIPRTPGRDFNFTPTFPEAGATIPCLLSGKKQSEDDLDEKPFKEPLGASLTISMNSVPSPIPFASPTQADFRTDMGLPPNEPIPIAALPCIPGDGRMPIEECKAEVKSVLLSPEAPVGASILPPPPPHSVLPKRRPGRPRRSPPSVLSLDMYSGKTIEPPPVPVALVESAMSKELLSAHPDAFYGLKDPEAVTLDFRNDSFHEKIAAETVAEKLPFKELENQWNEDFKEEEAHAKPKRQWRRQKKSPEHLPVIPSPEYSPPQPQFRPRSEFEEMTILYDIWNGGIDEEDIKFMCITYDRLLQQDNGMDWLNDTLWVFHPSTSFSTPKKKKRDDGMREHVTGCARSEGYYKIDKKDKLKYLNNSRAFAEEPPADTQGMSIPAQPHASTRAGSERRSEQRRLLSSFTGSCDSDLLKFNQLKFRKKKLKFCKSHIHDWGLFAMEPIAADEMVIEYVGQNIRQVIADMREKRYEDEGIGSSYMFRVDHDTIIDATKCGNFARFINHSCNPNCYAKVITVESQKKIVIYSKQHINVNEEITYDYKFPIEDVKIPCLCGSENCRGTLN.

Basic and acidic residues predominate over residues methionine 1 to lysine 20. The interval methionine 1–lysine 42 is disordered. Polar residues predominate over residues glutamine 22 to serine 39. The 89-residue stretch at aspartate 111–lysine 199 folds into the RRM domain. Disordered regions lie at residues asparagine 249–lysine 390, phenylalanine 402–threonine 652, proline 682–proline 725, arginine 950–glutamate 1172, threonine 1309–glutamate 1328, valine 1345–threonine 1461, valine 1563–glycine 1600, lysine 1674–arginine 1712, and glutamate 1814–glutamate 1842. Residues serine 251 to proline 264 show a composition bias toward low complexity. Composition is skewed to polar residues over residues phenylalanine 265–proline 293, proline 301–proline 315, histidine 360–leucine 381, serine 405–serine 414, and aspartate 456–serine 491. Over residues leucine 492–methionine 521 the composition is skewed to basic and acidic residues. The segment covering serine 524–proline 537 has biased composition (low complexity). 2 stretches are compositionally biased toward polar residues: residues glycine 540–glycine 560 and alanine 582–arginine 604. Composition is skewed to basic and acidic residues over residues serine 606–valine 617 and glutamate 626–glycine 636. Positions glutamate 637–methionine 646 are enriched in acidic residues. A compositionally biased stretch (basic and acidic residues) spans glutamate 979–glutamate 997. Positions leucine 1011–glutamate 1020 are enriched in acidic residues. The segment covering threonine 1021–glutamate 1031 has biased composition (basic and acidic residues). 2 stretches are compositionally biased toward acidic residues: residues glutamate 1050–alanine 1094 and glutamate 1105–aspartate 1149. Basic and acidic residues predominate over residues arginine 1150–glutamate 1172. Over residues valine 1345 to proline 1356 the composition is skewed to low complexity. Positions serine 1378–leucine 1392 are enriched in basic and acidic residues. The span at leucine 1418 to serine 1427 shows a compositional bias: low complexity. Basic residues-rich tracts occupy residues leucine 1577–arginine 1587 and lysine 1681–lysine 1690. Over residues isoleucine 1699 to glutamine 1710 the composition is skewed to pro residues. The short motif at arginine 1840 to arginine 1845 is the RxxxRR motif element. The SET domain occupies lysine 1869–lysine 1986. Residue tyrosine 1985 coordinates S-adenosyl-L-methionine. The Post-SET domain maps to valine 1992–asparagine 2008.

Belongs to the class V-like SAM-binding methyltransferase superfamily. In terms of assembly, component of the SET1B/COMPASS complex.

Its subcellular location is the nucleus speckle. It is found in the chromosome. The enzyme catalyses L-lysyl(4)-[histone H3] + 3 S-adenosyl-L-methionine = N(6),N(6),N(6)-trimethyl-L-lysyl(4)-[histone H3] + 3 S-adenosyl-L-homocysteine + 3 H(+). Its function is as follows. Histone methyltransferase that specifically methylates 'Lys-4' of histone H3, when part of the SET1 histone methyltransferase (HMT) complex, but not if the neighboring 'Lys-9' residue is already methylated. H3 'Lys-4' methylation represents a specific tag for epigenetic transcriptional activation. In Gallus gallus (Chicken), this protein is Histone-lysine N-methyltransferase SETD1B (SETD1B).